The following is a 139-amino-acid chain: MIKEFREFISRGNVIDLAVGVIVGAAFTAIINSLVNDIINPLIGLLVGGRADFSNYFIPLAGQTATTLAEAQAAGPVLAYGSFLTAVINFLLIAFVVFMIVRTVNRMRSKPEAVPPAPPEPTPSERLLAEIRDLLARQG.

2 helical membrane passes run 14–34 (VIDL…INSL) and 81–101 (GSFL…FMIV).

This sequence belongs to the MscL family. As to quaternary structure, homopentamer.

The protein localises to the cell membrane. In terms of biological role, channel that opens in response to stretch forces in the membrane lipid bilayer. May participate in the regulation of osmotic pressure changes within the cell. This Chloroflexus aurantiacus (strain ATCC 29366 / DSM 635 / J-10-fl) protein is Large-conductance mechanosensitive channel.